The following is a 415-amino-acid chain: Multidrug resistance protein MdtA (415 aa).

The N-terminal stretch at 1 to 21 (MKGSYKSRWVIVIVVVIAAIA) is a signal peptide. Disordered regions lie at residues 32–59 (SRSA…SGPL) and 392–415 (EAQS…GARS). Basic and acidic residues predominate over residues 399-415 (SEEKATSREYAKKGARS).

The protein belongs to the membrane fusion protein (MFP) (TC 8.A.1) family. Part of a tripartite efflux system composed of MdtA, MdtB and MdtC.

Its subcellular location is the cell inner membrane. In terms of biological role, the MdtABC tripartite complex confers resistance against novobiocin and deoxycholate. In Escherichia coli (strain SMS-3-5 / SECEC), this protein is Multidrug resistance protein MdtA.